The chain runs to 156 residues: Arginine repressor (156 aa).

This sequence belongs to the ArgR family.

It localises to the cytoplasm. Its pathway is amino-acid biosynthesis; L-arginine biosynthesis [regulation]. Regulates arginine biosynthesis genes. The protein is Arginine repressor of Cronobacter sakazakii (strain ATCC BAA-894) (Enterobacter sakazakii).